The primary structure comprises 155 residues: NADH-ubiquinone oxidoreductase chain 6 (155 aa).

4 helical membrane-spanning segments follow: residues 10-30 (ILAI…VLFV), 43-63 (LMGI…FLFI), 75-95 (GTIH…LDLS), and 133-153 (AIPM…AIAI).

This sequence belongs to the complex I subunit 6 family.

Its subcellular location is the mitochondrion membrane. It carries out the reaction a ubiquinone + NADH + 5 H(+)(in) = a ubiquinol + NAD(+) + 4 H(+)(out). In terms of biological role, core subunit of the mitochondrial membrane respiratory chain NADH dehydrogenase (Complex I) that is believed to belong to the minimal assembly required for catalysis. Complex I functions in the transfer of electrons from NADH to the respiratory chain. The immediate electron acceptor for the enzyme is believed to be ubiquinone. This Candida parapsilosis (Yeast) protein is NADH-ubiquinone oxidoreductase chain 6 (ND6).